Here is a 138-residue protein sequence, read N- to C-terminus: ATP synthase epsilon chain (138 aa).

The protein belongs to the ATPase epsilon chain family. F-type ATPases have 2 components, CF(1) - the catalytic core - and CF(0) - the membrane proton channel. CF(1) has five subunits: alpha(3), beta(3), gamma(1), delta(1), epsilon(1). CF(0) has three main subunits: a, b and c.

Its subcellular location is the cell inner membrane. In terms of biological role, produces ATP from ADP in the presence of a proton gradient across the membrane. This chain is ATP synthase epsilon chain, found in Psychrobacter cryohalolentis (strain ATCC BAA-1226 / DSM 17306 / VKM B-2378 / K5).